The sequence spans 522 residues: Protein RCC2 (522 aa).

The segment at M1–V83 is disordered. A Phosphoserine modification is found at S16. T20 carries the phosphothreonine modification. Basic residues predominate over residues G24–R36. Residues S43, S44, S45, S46, S50, and S51 each carry the phosphoserine modification. Low complexity predominate over residues R71–A82. K92 and K124 each carry N6-acetyllysine. 7 RCC1 repeats span residues K103 to I165, E168 to E219, G221 to C271, G273 to S347, Q348 to E401, G403 to D447, and E448 to R501. Residue K293 is modified to N6-acetyllysine. The required for interaction with RAC1 stretch occupies residues K318–L325. At T342 the chain carries Phosphothreonine. K377 carries the N6-acetyllysine modification. Positions D502–P515 are enriched in basic and acidic residues. The interval D502–L522 is disordered.

Interacts with RAC1. Interacts with nucleotide-free and with GDP and GTP-bound forms of RAC1, with a slight preference for GDP-bound RAC1. Binds preferentially to the nucleotide-free form of RAC1. Interacts with CORO1C. Interacts with microtubules.

The protein resides in the nucleus. It is found in the nucleolus. The protein localises to the cytoplasm. It localises to the cytoskeleton. Its subcellular location is the chromosome. The protein resides in the centromere. It is found in the spindle. The protein localises to the midbody. It localises to the cell membrane. In terms of biological role, multifunctional protein that may affect its functions by regulating the activity of small GTPases, such as RAC1 and RALA. Required for normal progress through the cell cycle, both during interphase and during mitosis. Required for the presence of normal levels of MAD2L1, AURKB and BIRC5 on inner centromeres during mitosis, and for normal attachment of kinetochores to mitotic spindles. Required for normal organization of the microtubule cytoskeleton in interphase cells. Functions as guanine nucleotide exchange factor (GEF) for RALA. Interferes with the activation of RAC1 by guanine nucleotide exchange factors. Prevents accumulation of active, GTP-bound RAC1, and suppresses RAC1-mediated reorganization of the actin cytoskeleton and formation of membrane protrusions. Required for normal cellular responses to contacts with the extracellular matrix of adjacent cells, and for directional cell migration in response to a fibronectin gradient (in vitro). The sequence is that of Protein RCC2 (RCC2) from Homo sapiens (Human).